A 283-amino-acid polypeptide reads, in one-letter code: Homeobox protein Hox-A9a (283 aa).

Disordered regions lie at residues 25-54 and 162-181; these read VPRY…GTCS and EKDA…EKPG. Residues 216-275 constitute a DNA-binding region (homeobox); sequence TRKKRCPYTKHQILELEKEFLFNTYLTRDRRYEVARLLNLTERQVKIWFQNRRMKMKKFN.

The protein belongs to the Abd-B homeobox family.

The protein localises to the nucleus. Its function is as follows. Sequence-specific transcription factor which is part of a developmental regulatory system that provides cells with specific positional identities on the anterior-posterior axis. This is Homeobox protein Hox-A9a (hoxa9a) from Takifugu rubripes (Japanese pufferfish).